Reading from the N-terminus, the 214-residue chain is uncharacterized protein (214 aa).

Residues T131–Y214 form a disordered region. The span at H174 to V189 shows a compositional bias: basic residues. The span at D197 to Y214 shows a compositional bias: low complexity.

This is an uncharacterized protein from Tupaia.